The chain runs to 205 residues: Dephospho-CoA kinase (205 aa).

A DPCK domain is found at Val4–Gln204. Ala12 to Thr17 is a binding site for ATP.

The protein belongs to the CoaE family.

The protein resides in the cytoplasm. It catalyses the reaction 3'-dephospho-CoA + ATP = ADP + CoA + H(+). Its pathway is cofactor biosynthesis; coenzyme A biosynthesis; CoA from (R)-pantothenate: step 5/5. Functionally, catalyzes the phosphorylation of the 3'-hydroxyl group of dephosphocoenzyme A to form coenzyme A. This Haemophilus ducreyi (strain 35000HP / ATCC 700724) protein is Dephospho-CoA kinase.